We begin with the raw amino-acid sequence, 342 residues long: Vancomycin B-type resistance protein VanB (342 aa).

Residues K132, 168 to 170 (FVK), 176 to 177 (SS), 206 to 213 (EQAISGCE), and F240 contribute to the ATP site. Residues 136-337 (YILTKNAGIA…LPALIDSLIT (202 aa)) form the ATP-grasp domain. Residue H243 participates in substrate binding. ATP is bound at residue 303–304 (NE). Mg(2+)-binding residues include E304 and N306.

The protein belongs to the D-alanine--D-alanine ligase family. It depends on Mg(2+) as a cofactor. Requires Mn(2+) as cofactor.

It is found in the cell membrane. It carries out the reaction (R)-lactate + D-alanine + ATP = D-alanyl-(R)-lactate + ADP + phosphate. Its function is as follows. Required for high-level resistance to glycopeptides antibiotics. D-Ala--D-Ala ligase of altered specificity which catalyzes ester bond formation between D-Ala and various D-hydroxy acids; producing a peptidoglycan which does not terminate in D-alanine but in D-lactate, thus preventing vancomycin binding. The protein is Vancomycin B-type resistance protein VanB (vanB) of Enterococcus faecalis (strain ATCC 700802 / V583).